A 220-amino-acid polypeptide reads, in one-letter code: ATP-dependent Clp protease proteolytic subunit (220 aa).

The Nucleophile role is filled by Ser125. His150 is a catalytic residue.

The protein belongs to the peptidase S14 family. In terms of assembly, fourteen ClpP subunits assemble into 2 heptameric rings which stack back to back to give a disk-like structure with a central cavity, resembling the structure of eukaryotic proteasomes.

The protein localises to the cytoplasm. It carries out the reaction Hydrolysis of proteins to small peptides in the presence of ATP and magnesium. alpha-casein is the usual test substrate. In the absence of ATP, only oligopeptides shorter than five residues are hydrolyzed (such as succinyl-Leu-Tyr-|-NHMec, and Leu-Tyr-Leu-|-Tyr-Trp, in which cleavage of the -Tyr-|-Leu- and -Tyr-|-Trp bonds also occurs).. Cleaves peptides in various proteins in a process that requires ATP hydrolysis. Has a chymotrypsin-like activity. Plays a major role in the degradation of misfolded proteins. The chain is ATP-dependent Clp protease proteolytic subunit from Bacteroides fragilis (strain YCH46).